We begin with the raw amino-acid sequence, 1162 residues long: PAN2-PAN3 deadenylation complex catalytic subunit PAN2 (1162 aa).

4 WD repeats span residues 27 to 66 (AKEK…YTRH), 153 to 193 (NTVQ…VVKT), 196 to 233 (GHSC…NVYD), and 300 to 339 (HPCQ…TGFT). Residues 341 to 491 (TATTILEYPD…LMNYKPSNDR (151 aa)) form a linker region. Residues 401–443 (VPLPPKSSAASSSHTALSTSSDSRPNTARSGNPSSGGQKYRLL) are disordered. The span at 407–423 (SSAASSSHTALSTSSDS) shows a compositional bias: low complexity. Over residues 424–437 (RPNTARSGNPSSGG) the composition is skewed to polar residues. Residues 492-904 (EVPPAFTKLQ…TPEIAIYSDA (413 aa)) enclose the USP domain. An Exonuclease domain is found at 956–1126 (VALDAEFVAL…IEDAYTALVL (171 aa)). Positions 959, 961, 1068, and 1119 each coordinate a divalent metal cation.

It belongs to the peptidase C19 family. PAN2 subfamily. As to quaternary structure, forms a heterotrimer with an asymmetric homodimer of the regulatory subunit PAN3 to form the poly(A)-nuclease (PAN) deadenylation complex. A divalent metal cation serves as cofactor.

The protein localises to the cytoplasm. It catalyses the reaction Exonucleolytic cleavage of poly(A) to 5'-AMP.. With respect to regulation, positively regulated by the regulatory subunit PAN3. Catalytic subunit of the poly(A)-nuclease (PAN) deadenylation complex, one of two cytoplasmic mRNA deadenylases involved in mRNA turnover. PAN specifically shortens poly(A) tails of RNA and the activity is stimulated by poly(A)-binding protein PAB1. PAN deadenylation is followed by rapid degradation of the shortened mRNA tails by the CCR4-NOT complex. Deadenylated mRNAs are then degraded by two alternative mechanisms, namely exosome-mediated 3'-5' exonucleolytic degradation, or deadenylation-dependent mRNA decaping and subsequent 5'-3' exonucleolytic degradation by XRN1. May also be involved in post-transcriptional maturation of mRNA poly(A) tails. The polypeptide is PAN2-PAN3 deadenylation complex catalytic subunit PAN2 (Eremothecium gossypii (strain ATCC 10895 / CBS 109.51 / FGSC 9923 / NRRL Y-1056) (Yeast)).